We begin with the raw amino-acid sequence, 398 residues long: Carbamoyl phosphate synthase small chain (398 aa).

The CPSase stretch occupies residues 1–207 (MIQTISSSRP…KGYGTNNVHN (207 aa)). Residues Ser-60, Gly-257, and Gly-259 each coordinate L-glutamine. In terms of domain architecture, Glutamine amidotransferase type-1 spans 209–397 (HIVAIDYGIK…CDLIMNHKKI (189 aa)). The active-site Nucleophile is the Cys-286. L-glutamine contacts are provided by Leu-287, Gln-290, Asn-328, Gly-330, and Phe-331. Active-site residues include His-370 and Glu-372.

The protein belongs to the CarA family. In terms of assembly, composed of two chains; the small (or glutamine) chain promotes the hydrolysis of glutamine to ammonia, which is used by the large (or ammonia) chain to synthesize carbamoyl phosphate. Tetramer of heterodimers (alpha,beta)4.

The catalysed reaction is hydrogencarbonate + L-glutamine + 2 ATP + H2O = carbamoyl phosphate + L-glutamate + 2 ADP + phosphate + 2 H(+). It catalyses the reaction L-glutamine + H2O = L-glutamate + NH4(+). Its pathway is amino-acid biosynthesis; L-arginine biosynthesis; carbamoyl phosphate from bicarbonate: step 1/1. It participates in pyrimidine metabolism; UMP biosynthesis via de novo pathway; (S)-dihydroorotate from bicarbonate: step 1/3. Functionally, small subunit of the glutamine-dependent carbamoyl phosphate synthetase (CPSase). CPSase catalyzes the formation of carbamoyl phosphate from the ammonia moiety of glutamine, carbonate, and phosphate donated by ATP, constituting the first step of 2 biosynthetic pathways, one leading to arginine and/or urea and the other to pyrimidine nucleotides. The small subunit (glutamine amidotransferase) binds and cleaves glutamine to supply the large subunit with the substrate ammonia. The chain is Carbamoyl phosphate synthase small chain from Bartonella tribocorum (strain CIP 105476 / IBS 506).